Reading from the N-terminus, the 515-residue chain is Leucine-rich repeat transmembrane neuronal protein 2 (515 aa).

An N-terminal signal peptide occupies residues Met1–Ala33. Over Cys34–Arg421 the chain is Extracellular. Asn57 carries an N-linked (GlcNAc...) asparagine glycan. LRR repeat units lie at residues Lys61–Ser83, Phe84–Gly107, Tyr109–Gln131, Leu132–Gly155, Leu156–Asp179, Arg181–Gly203, Ile205–Arg227, Ser229–Thr251, Trp252–Thr275, and Met276–Ser299. Asn126 carries N-linked (GlcNAc...) asparagine glycosylation. Asn243 carries N-linked (GlcNAc...) asparagine glycosylation. Asn362 is a glycosylation site (N-linked (GlcNAc...) asparagine). The helical transmembrane segment at Val422–Ile442 threads the bilayer. Over Ser443 to Val515 the chain is Cytoplasmic. The Involved in DLG4-binding signature appears at Glu512–Val515.

Belongs to the LRRTM family. As to quaternary structure, interacts with DLG4. Interacts with neurexin NRXN1; interaction is mediated by heparan sulfate glycan modification on neurexin. As to expression, expressed in neuronal tissues. Widely distributed in neuropil regions in discrete puncta throughout the brain (at protein level). Detected in cortex, thalamus, striatum, olfactory bulb, cerebellum and all hippocampal subfields (at protein level). More abundant in deep than in superficial layers of neocortex (at protein level).

The protein resides in the cell membrane. It is found in the postsynaptic cell membrane. In terms of biological role, involved in the development and maintenance of excitatory synapses in the nervous system. Regulates surface expression of AMPA receptors and instructs the development of functional glutamate release sites. Acts as a ligand for the presynaptic receptors NRXN1-A and NRXN1-B. In Rattus norvegicus (Rat), this protein is Leucine-rich repeat transmembrane neuronal protein 2 (Lrrtm2).